Consider the following 903-residue polypeptide: MGKFEDDGNSESVPLTRQRSESLASQTSTDSGLSIASESFMKNHKGGNTMPTDGGDGDRYLDVEDGGETGLDEPLISSGTKTGSSSRLRKIVWLLVLLCVGGWVLSFVLFLTQKRPDTAALSSASTVEIHEPGPATGGTSHGKPVTLEQVLSGTWSPKSHAISWIAGPDGEDGLLVEQGEKQDAFLRVKDIRSSEDGVDNLETRVLMKKGYIWFDGEAMLSAKTWPSPDMNRVLVMTDIQSNWRHSYFGKYWILDVATQKAEPLDPGNLSGRVQLAAWSPTSDAVVFVRENNLYLRKLTSLEVTPITKDGDENLFYGVPDWVYEEEVFSGNTGTWWSDDGKFVAFLRTNETAVPEYPIQYFRSRPSGKQPPPGLENYPEVRQIKYPKPGSPNPIVNLQFYDVEKNEVFSFEMPEDFVDDERIIIEVVWASEGKVLIRETNRESDVVKIFVMDTKARTGKLVRSDDIAALDGGWVEPTQSTRVIPADPKNGRPHDGYVDTVIYEGYDHLAYFTPFDNPEPVMLTKGNWEVVNAPSAVDLKKGLVYFVATKEAPTQRHVYSVKLDGSDLRPLTDTSAPGFFDVSFSHGAGYGLLSYKGPAVPWQAVINTQGDEIDFINLIEENVELAKMVEESAIPTEVYSNVTIDGYTLQVLERRPPNFNPEKKYPVLFFLYGGPGSQTVDRKFTIDFQTYVASNLGYIVVTVDGRGTGFIGREARCLVRGNIGHYEAIDQIETAKIWASKSYVDESRMAVWGWSYGGYMTLKVLEQDAGETFQYGMAVAPVTDWRFYDSIYTERYMHTPEHNPSGYANASIDDVMALGHSVRFLIMHGVADDNVHLQNTLVLIDKLDLKNIDNYDMQVFPDSDHSIQFHMAHALVYERLSSWLINAFNGEWHRTANPKPQEST.

The tract at residues 1–83 (MGKFEDDGNS…PLISSGTKTG (83 aa)) is disordered. Topologically, residues 1 to 90 (MGKFEDDGNS…KTGSSSRLRK (90 aa)) are cytoplasmic. Polar residues predominate over residues 10 to 37 (SESVPLTRQRSESLASQTSTDSGLSIAS). A helical; Signal-anchor for type II membrane protein transmembrane segment spans residues 91–111 (IVWLLVLLCVGGWVLSFVLFL). Topologically, residues 112–903 (TQKRPDTAAL…TANPKPQEST (792 aa)) are vacuolar. The tract at residues 121-143 (LSSASTVEIHEPGPATGGTSHGK) is disordered. 3 N-linked (GlcNAc...) asparagine glycosylation sites follow: Asn268, Asn349, and Asn640. Ser754 serves as the catalytic Charge relay system. A glycan (N-linked (GlcNAc...) asparagine) is linked at Asn808. Catalysis depends on charge relay system residues Asp831 and His864.

It belongs to the peptidase S9B family.

Its subcellular location is the vacuole membrane. It catalyses the reaction Release of an N-terminal dipeptide, Xaa-Yaa-|-Zaa-, from a polypeptide, preferentially when Yaa is Pro, provided Zaa is neither Pro nor hydroxyproline.. Its function is as follows. Type IV dipeptidyl-peptidase which removes N-terminal dipeptides sequentially from polypeptides having unsubstituted N-termini provided that the penultimate residue is proline. This Penicillium rubens (strain ATCC 28089 / DSM 1075 / NRRL 1951 / Wisconsin 54-1255) (Penicillium chrysogenum) protein is Probable dipeptidyl-aminopeptidase B (dapB).